The sequence spans 156 residues: Small ribosomal subunit protein uS7 (156 aa).

The protein belongs to the universal ribosomal protein uS7 family. As to quaternary structure, part of the 30S ribosomal subunit. Contacts proteins S9 and S11.

Functionally, one of the primary rRNA binding proteins, it binds directly to 16S rRNA where it nucleates assembly of the head domain of the 30S subunit. Is located at the subunit interface close to the decoding center, probably blocks exit of the E-site tRNA. The protein is Small ribosomal subunit protein uS7 of Streptococcus thermophilus (strain CNRZ 1066).